We begin with the raw amino-acid sequence, 316 residues long: Porphobilinogen deaminase (316 aa).

Cysteine 242 is modified (S-(dipyrrolylmethanemethyl)cysteine).

Belongs to the HMBS family. As to quaternary structure, monomer. Requires dipyrromethane as cofactor.

The catalysed reaction is 4 porphobilinogen + H2O = hydroxymethylbilane + 4 NH4(+). It participates in porphyrin-containing compound metabolism; protoporphyrin-IX biosynthesis; coproporphyrinogen-III from 5-aminolevulinate: step 2/4. Its function is as follows. Tetrapolymerization of the monopyrrole PBG into the hydroxymethylbilane pre-uroporphyrinogen in several discrete steps. This is Porphobilinogen deaminase from Thioalkalivibrio sulfidiphilus (strain HL-EbGR7).